We begin with the raw amino-acid sequence, 87 residues long: U3-theraphotoxin-Hhn1i (87 aa).

The signal sequence occupies residues 1-24 (MVNMEASMFLTFAGLVLLFVVCYA). The propeptide occupies 25 to 52 (SESEEKEFPKEMLSSIFAVDNDFKQEER). 3 disulfide bridges follow: C54–C67, C61–C72, and C66–C79.

Belongs to the neurotoxin 10 (Hwtx-1) family. 51 (Hntx-8) subfamily. Hntx-8 sub-subfamily. In terms of tissue distribution, expressed by the venom gland.

The protein resides in the secreted. In terms of biological role, ion channel inhibitor. This Cyriopagopus hainanus (Chinese bird spider) protein is U3-theraphotoxin-Hhn1i.